Consider the following 245-residue polypeptide: Pyridoxine 5'-phosphate synthase (245 aa).

Position 7 (Asn-7) interacts with 3-amino-2-oxopropyl phosphate. 9-10 (DH) lines the 1-deoxy-D-xylulose 5-phosphate pocket. Arg-18 lines the 3-amino-2-oxopropyl phosphate pocket. Catalysis depends on His-43, which acts as the Proton acceptor. 1-deoxy-D-xylulose 5-phosphate contacts are provided by Arg-45 and His-50. The active-site Proton acceptor is Glu-70. Position 100 (Thr-100) interacts with 1-deoxy-D-xylulose 5-phosphate. His-190 acts as the Proton donor in catalysis. 3-amino-2-oxopropyl phosphate-binding positions include Gly-191 and 212–213 (GH).

This sequence belongs to the PNP synthase family. In terms of assembly, homooctamer; tetramer of dimers.

It localises to the cytoplasm. It catalyses the reaction 3-amino-2-oxopropyl phosphate + 1-deoxy-D-xylulose 5-phosphate = pyridoxine 5'-phosphate + phosphate + 2 H2O + H(+). It participates in cofactor biosynthesis; pyridoxine 5'-phosphate biosynthesis; pyridoxine 5'-phosphate from D-erythrose 4-phosphate: step 5/5. Its function is as follows. Catalyzes the complicated ring closure reaction between the two acyclic compounds 1-deoxy-D-xylulose-5-phosphate (DXP) and 3-amino-2-oxopropyl phosphate (1-amino-acetone-3-phosphate or AAP) to form pyridoxine 5'-phosphate (PNP) and inorganic phosphate. In Prochlorococcus marinus (strain NATL2A), this protein is Pyridoxine 5'-phosphate synthase.